The chain runs to 184 residues: Ribosome-recycling factor (184 aa).

The protein belongs to the RRF family.

The protein resides in the cytoplasm. In terms of biological role, responsible for the release of ribosomes from messenger RNA at the termination of protein biosynthesis. May increase the efficiency of translation by recycling ribosomes from one round of translation to another. This chain is Ribosome-recycling factor, found in Cutibacterium acnes (strain DSM 16379 / KPA171202) (Propionibacterium acnes).